We begin with the raw amino-acid sequence, 1134 residues long: MTMTANKNSSITHGTGGTKAPRETLSRSQSVSPPPVLYPPRSPIYPLSDSETSACRYPSHSKSQVLLKDRHSRNPSLLGQDPSPETSPPICTLKATSFSYLDRTPSLRKREDQKETVQGAVQDVEGVAACLPLAQSTPFLGAGSRSVLLSCTGTRAHSLGIREKISAWEGRREASPRMSLCGEKREGPGSEWSVSEGCPSVGCPSVVPSPCSSEKTFDFKGLRRMSRTFSECSYPETEEEAEALPGRDSLYRLEKRPGRTEPSALLRGHGIRKESSAVLSRIQKIEQALKEQPGRGLPQLPSSCYSVDQGRRKTGTLGTLEEPTGTASVSPSSRAGGVAGVAGEAGPPLDREGSASMKSETPGNSSSPQLLPPKSSPDPAVNPVPKPKRTFEYEADKNPKTKPSNGLPPSPTPAAPPPLPSTPAPPVTRRPKKDMRGHRKSQNRKSFEFEDASSLQSLYPSSPTENGTESQPKFGSKSTLEENAYEDIVGGLPKENPYEDVDLKNRRAGRKSQQLSENSLDSLHRMWSPQDRKYNHPPMQLSLKSNSQSLRSGNWSERKSHRLPRLPKRHSHDDMMLLAQLSLPSSPSSLNEDSLSTTSELLSSRRSRRIPKLVQRINSIYNAKRGKKRLKKLSMSSLETASLRDENSESESDSDDRFKAHTQRLVHIQSMLKRAPSYRTLELELLEWQERELFEYFVVVSLKKKPSRNTYLPEVSYQFPKLDRPTKQMREAEERLKAIPQFCFPDAKDWLPVSEYSSETFSFMLTGEDGSRRFGYCRRLLPSGKGPRLPEVYCVISRLGCFGLFSKVLDEVERRRGISAALVYPFMRSLMESPFPAPGKTIKVKTFLPGAGNEVLELRRPMDSRLEHVDFECLFTCLSVRQLIRIFASLLLERRVIFVADKLSTLSSCSHAVVALLYPFSWQHTFIPVLPASMIDIVCCPTPFLVGLLSSSLPKLKELPVEEALMVNLGSDRFIRQMDDEDTLLPRKLQAALEQALERKSELISQDSDSDSDDECNTLNGLVSEVFIRFFVETVGHYSLFLTHSEKGERAFQREAFRKSVASKSIRRFLEVFMESQMFAGFIQDRELRKCRAKGLFEQRVEQYLEELPDTEQSGMNKFLRGLGNKMKFLHKKN.

Over residues 1 to 13 the composition is skewed to polar residues; sequence MTMTANKNSSITH. Residues 1 to 90 are disordered; sequence MTMTANKNSS…DPSPETSPPI (90 aa). Residues S30 and S32 each carry the phosphoserine modification. Residues 32–43 show a composition bias toward pro residues; the sequence is SPPPVLYPPRSP. A Phosphothreonine modification is found at T228. S230 is modified (phosphoserine). 2 disordered regions span residues 233 to 273 and 289 to 571; these read SYPE…GIRK and LKEQ…KRHS. Positions 249-259 are enriched in basic and acidic residues; the sequence is SLYRLEKRPGR. Residues 315-348 show a composition bias toward low complexity; sequence GTLGTLEEPTGTASVSPSSRAGGVAGVAGEAGPP. Residue T361 is modified to Phosphothreonine. S365 is subject to Phosphoserine. Pro residues predominate over residues 370–385; it reads LLPPKSSPDPAVNPVP. Basic and acidic residues predominate over residues 389–399; it reads RTFEYEADKNP. Positions 406–428 are enriched in pro residues; sequence GLPPSPTPAAPPPLPSTPAPPVT. Positions 429–443 are enriched in basic residues; the sequence is RRPKKDMRGHRKSQN. The span at 453-478 shows a compositional bias: polar residues; the sequence is SSLQSLYPSSPTENGTESQPKFGSKS. The residue at position 479 (T479) is a Phosphothreonine. 2 stretches are compositionally biased toward polar residues: residues 511–521 and 542–555; these read KSQQLSENSLD and SLKS…SGNW. S542 is subject to Phosphoserine. Basic residues predominate over residues 559–570; it reads KSHRLPRLPKRH. A phosphoserine mark is found at S571 and S619. The segment at 633–658 is disordered; that stretch reads LSMSSLETASLRDENSESESDSDDRF. One can recognise a uDENN domain in the interval 695–843; it reads EYFVVVSLKK…PFPAPGKTIK (149 aa). Residues 865-998 enclose the cDENN domain; sequence RLEHVDFECL…LQAALEQALE (134 aa). Residues 1000–1093 form the dDENN domain; that stretch reads KSELISQDSD…QDRELRKCRA (94 aa).

As to quaternary structure, interacts with ITSN1 and GRB2. Isoform 1 interacts with the SH3 domain of ABL1. Phosphorylated. Phosphorylation decreases ITSN1 binding.

The protein localises to the cytoplasm. It is found in the cell cortex. It localises to the cell membrane. The protein resides in the recycling endosome. Functionally, may be involved in cytoskeletal organization and tumorogenicity. Seems to be involved in a signaling transduction pathway leading to activation of MAPK1/ERK2. Plays a role in EGFR trafficking from recycling endosomes back to the cell membrane. Guanine nucleotide exchange factor (GEF) which may activate RAB9A and RAB9B. Promotes the exchange of GDP to GTP, converting inactive GDP-bound Rab proteins into their active GTP-bound form. Its function is as follows. May block ERK2 activation stimulated by ABL1. May alter cell morphology and cell growth. The sequence is that of DENN domain-containing protein 2B (Dennd2b) from Mus musculus (Mouse).